Reading from the N-terminus, the 1071-residue chain is DNA-directed RNA polymerase subunit beta (1071 aa).

This sequence belongs to the RNA polymerase beta chain family. As to quaternary structure, in plastids the minimal PEP RNA polymerase catalytic core is composed of four subunits: alpha, beta, beta', and beta''. When a (nuclear-encoded) sigma factor is associated with the core the holoenzyme is formed, which can initiate transcription.

The protein localises to the plastid. Its subcellular location is the chloroplast. The catalysed reaction is RNA(n) + a ribonucleoside 5'-triphosphate = RNA(n+1) + diphosphate. Functionally, DNA-dependent RNA polymerase catalyzes the transcription of DNA into RNA using the four ribonucleoside triphosphates as substrates. This is DNA-directed RNA polymerase subunit beta from Panax ginseng (Korean ginseng).